A 288-amino-acid chain; its full sequence is Acetylglutamate kinase (288 aa).

Substrate is bound by residues 73 to 74 (GG), R95, and N186.

It belongs to the acetylglutamate kinase family. ArgB subfamily.

It is found in the cytoplasm. It catalyses the reaction N-acetyl-L-glutamate + ATP = N-acetyl-L-glutamyl 5-phosphate + ADP. The protein operates within amino-acid biosynthesis; L-arginine biosynthesis; N(2)-acetyl-L-ornithine from L-glutamate: step 2/4. In terms of biological role, catalyzes the ATP-dependent phosphorylation of N-acetyl-L-glutamate. This chain is Acetylglutamate kinase, found in Pelagibacter ubique (strain HTCC1062).